The chain runs to 248 residues: 4-hydroxy-tetrahydrodipicolinate reductase (248 aa).

NAD(+) is bound by residues Gly9 to Val14, Gly77 to Thr79, and Ala104 to Phe107. The active-site Proton donor/acceptor is His134. A (S)-2,3,4,5-tetrahydrodipicolinate-binding site is contributed by His135. Residue Lys138 is the Proton donor of the active site. Gly144–Thr145 contributes to the (S)-2,3,4,5-tetrahydrodipicolinate binding site.

It belongs to the DapB family.

It localises to the cytoplasm. The catalysed reaction is (S)-2,3,4,5-tetrahydrodipicolinate + NAD(+) + H2O = (2S,4S)-4-hydroxy-2,3,4,5-tetrahydrodipicolinate + NADH + H(+). The enzyme catalyses (S)-2,3,4,5-tetrahydrodipicolinate + NADP(+) + H2O = (2S,4S)-4-hydroxy-2,3,4,5-tetrahydrodipicolinate + NADPH + H(+). The protein operates within amino-acid biosynthesis; L-lysine biosynthesis via DAP pathway; (S)-tetrahydrodipicolinate from L-aspartate: step 4/4. Catalyzes the conversion of 4-hydroxy-tetrahydrodipicolinate (HTPA) to tetrahydrodipicolinate. This is 4-hydroxy-tetrahydrodipicolinate reductase from Corynebacterium glutamicum (strain R).